A 165-amino-acid chain; its full sequence is UPF0254 protein MMP0935 (165 aa).

The protein belongs to the UPF0254 family.

The polypeptide is UPF0254 protein MMP0935 (Methanococcus maripaludis (strain DSM 14266 / JCM 13030 / NBRC 101832 / S2 / LL)).